Here is a 268-residue protein sequence, read N- to C-terminus: Acyl-CoA-binding domain-containing protein 4 (268 aa).

Residues 12 to 101 (CQKQFQAAVS…MKLVAQKVID (90 aa)) enclose the ACB domain. Residues 23-32 (IQNLPKNGSY), 43-47 (YSYYK), Lys-69, and Tyr-88 contribute to the an acyl-CoA site. A disordered region spans residues 151 to 175 (AVSEPPCLPKEPAPPSPESHSPRDL). Over residues 156–167 (PCLPKEPAPPSP) the composition is skewed to pro residues. Ser-166 and Ser-171 each carry phosphoserine.

In terms of biological role, binds medium- and long-chain acyl-CoA esters and may function as an intracellular carrier of acyl-CoA esters. This Homo sapiens (Human) protein is Acyl-CoA-binding domain-containing protein 4 (ACBD4).